The chain runs to 150 residues: Peptidoglycan-associated lipoprotein (150 aa).

The signal sequence occupies residues 1–19; it reads MKKLTKVLLVAGSVAVLAA. Cys-20 carries N-palmitoyl cysteine lipidation. Cys-20 carries S-diacylglycerol cysteine lipidation. Residues 37 to 150 enclose the OmpA-like domain; it reads SVQDLQQRYN…SKNRRAVLAY (114 aa).

Belongs to the Pal lipoprotein family. As to quaternary structure, the Tol-Pal system is composed of five core proteins: the inner membrane proteins TolA, TolQ and TolR, the periplasmic protein TolB and the outer membrane protein Pal. They form a network linking the inner and outer membranes and the peptidoglycan layer.

The protein localises to the cell outer membrane. Its function is as follows. Part of the Tol-Pal system, which plays a role in outer membrane invagination during cell division and is important for maintaining outer membrane integrity. The polypeptide is Peptidoglycan-associated lipoprotein (Pasteurella multocida (strain Pm70)).